We begin with the raw amino-acid sequence, 397 residues long: UPF0261 protein mlr3387 (397 aa).

This sequence belongs to the UPF0261 family.

The sequence is that of UPF0261 protein mlr3387 from Mesorhizobium japonicum (strain LMG 29417 / CECT 9101 / MAFF 303099) (Mesorhizobium loti (strain MAFF 303099)).